Consider the following 309-residue polypeptide: MNHLKTFILLAGLTALFVGAGYMIGGPTGMLVALVLAVGMNLFSYWNADKIVLRMYGAVEVDASHPEPRVRAYVADVEDLARRAGLPRPRITVIDSQQPNAFATGRDPDHAAVAASTGLLGLLDRDEIRGVMAHELAHVKNRDTLTMTVTATIAGAISALANFAFFFGGSRDDDERPGGLVGTIALAILAPIAAMLVQMAISRSREYEADRIGAQIAGDGLALARALEKIEAYARGGAVNVEAERNPATAHLFIINPLSGRGRDSLFSTHPATRNRVEALLRLGVSQATRGRSGTAVPTGATGKSGPWG.

A run of 2 helical transmembrane segments spans residues 7 to 27 (FILL…IGGP) and 28 to 48 (TGML…YWNA). Residue histidine 134 coordinates Zn(2+). The active site involves glutamate 135. Zn(2+) is bound at residue histidine 138. Helical transmembrane passes span 149 to 169 (VTAT…FFGG) and 177 to 197 (PGGL…AMLV). Zn(2+) is bound at residue glutamate 206. The segment at 289 to 309 (TRGRSGTAVPTGATGKSGPWG) is disordered.

The protein belongs to the peptidase M48B family. The cofactor is Zn(2+).

It is found in the cell inner membrane. This Caulobacter sp. (strain K31) protein is Protease HtpX homolog.